We begin with the raw amino-acid sequence, 341 residues long: S-adenosylmethionine:tRNA ribosyltransferase-isomerase (341 aa).

Belongs to the QueA family. As to quaternary structure, monomer.

Its subcellular location is the cytoplasm. It carries out the reaction 7-aminomethyl-7-carbaguanosine(34) in tRNA + S-adenosyl-L-methionine = epoxyqueuosine(34) in tRNA + adenine + L-methionine + 2 H(+). Its pathway is tRNA modification; tRNA-queuosine biosynthesis. Its function is as follows. Transfers and isomerizes the ribose moiety from AdoMet to the 7-aminomethyl group of 7-deazaguanine (preQ1-tRNA) to give epoxyqueuosine (oQ-tRNA). The protein is S-adenosylmethionine:tRNA ribosyltransferase-isomerase of Clostridioides difficile (strain 630) (Peptoclostridium difficile).